The primary structure comprises 547 residues: Serine/threonine-protein kinase pkn3 (547 aa).

Positions 18 to 288 (YRVEALIGEG…EAFKAELQAV (271 aa)) constitute a Protein kinase domain. Residues 24–32 (IGEGGMGKV) and Lys47 each bind ATP. The active-site Proton acceptor is the Asp142. Residues 290–299 (KERRRMDSAP) show a composition bias toward basic and acidic residues. Residues 290–327 (KERRRMDSAPRRSANSSAVLAPLPRKSAASPQSDVRDA) are disordered.

It belongs to the protein kinase superfamily. Ser/Thr protein kinase family.

The enzyme catalyses L-seryl-[protein] + ATP = O-phospho-L-seryl-[protein] + ADP + H(+). The catalysed reaction is L-threonyl-[protein] + ATP = O-phospho-L-threonyl-[protein] + ADP + H(+). This Myxococcus xanthus protein is Serine/threonine-protein kinase pkn3 (pkn3).